We begin with the raw amino-acid sequence, 188 residues long: Threonylcarbamoyl-AMP synthase (188 aa).

One can recognise a YrdC-like domain in the interval 3–188 (QLHPSDIKDV…RSGKILRNGQ (186 aa)).

It belongs to the SUA5 family. TsaC subfamily.

Its subcellular location is the cytoplasm. It carries out the reaction L-threonine + hydrogencarbonate + ATP = L-threonylcarbamoyladenylate + diphosphate + H2O. Required for the formation of a threonylcarbamoyl group on adenosine at position 37 (t(6)A37) in tRNAs that read codons beginning with adenine. Catalyzes the conversion of L-threonine, HCO(3)(-)/CO(2) and ATP to give threonylcarbamoyl-AMP (TC-AMP) as the acyladenylate intermediate, with the release of diphosphate. The sequence is that of Threonylcarbamoyl-AMP synthase from Shewanella oneidensis (strain ATCC 700550 / JCM 31522 / CIP 106686 / LMG 19005 / NCIMB 14063 / MR-1).